We begin with the raw amino-acid sequence, 187 residues long: Small ribosomal subunit protein uS5 (187 aa).

A disordered region spans residues 1 to 20; it reads MAERENRRDRRDDRSREETP. The S5 DRBM domain maps to 22-85; sequence FADRLVAINR…EQAKRQMIRV (64 aa). Residues 154–174 are disordered; sequence DGLKRESSPRQVAQRRGKKVA.

This sequence belongs to the universal ribosomal protein uS5 family. As to quaternary structure, part of the 30S ribosomal subunit. Contacts proteins S4 and S8.

Its function is as follows. With S4 and S12 plays an important role in translational accuracy. Functionally, located at the back of the 30S subunit body where it stabilizes the conformation of the head with respect to the body. The sequence is that of Small ribosomal subunit protein uS5 from Cereibacter sphaeroides (strain ATCC 17025 / ATH 2.4.3) (Rhodobacter sphaeroides).